A 340-amino-acid chain; its full sequence is tRNA N6-adenosine threonylcarbamoyltransferase (340 aa).

Fe cation contacts are provided by His-111 and His-115. Substrate contacts are provided by residues Leu-134 to Gly-138, Asp-167, Gly-180, and Asn-276. Asp-304 contributes to the Fe cation binding site.

Belongs to the KAE1 / TsaD family. It depends on Fe(2+) as a cofactor.

It is found in the cytoplasm. It carries out the reaction L-threonylcarbamoyladenylate + adenosine(37) in tRNA = N(6)-L-threonylcarbamoyladenosine(37) in tRNA + AMP + H(+). Functionally, required for the formation of a threonylcarbamoyl group on adenosine at position 37 (t(6)A37) in tRNAs that read codons beginning with adenine. Is involved in the transfer of the threonylcarbamoyl moiety of threonylcarbamoyl-AMP (TC-AMP) to the N6 group of A37, together with TsaE and TsaB. TsaD likely plays a direct catalytic role in this reaction. The sequence is that of tRNA N6-adenosine threonylcarbamoyltransferase from Helicobacter pylori (strain Shi470).